Reading from the N-terminus, the 45-residue chain is MSKRTYQPNNRRRARVHGFRTRMRTRAGRAIVSARRRKGRKSLTA.

The protein belongs to the bacterial ribosomal protein bL34 family.

This Corynebacterium urealyticum (strain ATCC 43042 / DSM 7109) protein is Large ribosomal subunit protein bL34.